The primary structure comprises 533 residues: Inositol-3-phosphate synthase (533 aa).

Phosphothreonine is present on T48. G74, G75, N76, N77, and D148 together coordinate NAD(+). Residues S177 and S184 each carry the phosphoserine modification. 17 residues coordinate NAD(+): S184, I185, Q195, D196, R198, T244, A245, N246, T247, G295, S296, D320, L321, S323, N354, N355, and D356. S296 is subject to Phosphoserine. Residue S368 is modified to Phosphoserine. NAD(+) is bound at residue K369. S374 is modified (phosphoserine). NAD(+)-binding residues include G409, D410, D438, and S439.

The protein belongs to the myo-inositol 1-phosphate synthase family. As to quaternary structure, homotetramer. NAD(+) is required as a cofactor. Phosphorylation at Ser-184 and Ser-374 is associated with a decrease in activity. Increasingly phosphorylated in presence of valproate.

The protein resides in the cytoplasm. It catalyses the reaction D-glucose 6-phosphate = 1D-myo-inositol 3-phosphate. Its pathway is polyol metabolism; myo-inositol biosynthesis; myo-inositol from D-glucose 6-phosphate: step 1/2. With respect to regulation, competitively inhibited by myo-2-inosose 1-phosphate, which is also an intermediate in the catalytic reaction. Competitively inhibited by 2-deoxy-myo-inositol 1-phosphate (dMIP), 1-deoxy-1-(phosphonomethyl)-myo-2-inosose (DPMI), dihydroxyacetone phosphate (DHAP), 6-deoxy-D-glucose 6-(E)-vinylhomophosphonate, 6-deoxy-D-glucitol 6-(E)-vinylhomophosphonate, 2,6-dideoxy-D-glucose 6-(E)-vinylhomophosphonate and 2,6-dideoxy-D-glucitol 6-(E)-vinylhomophosphonate. Inhibited by 2-deoxyglucitol 6-phosphate (dgtolP). Its function is as follows. Key enzyme in myo-inositol biosynthesis pathway that catalyzes the conversion of glucose 6-phosphate to 1-myo-inositol 1-phosphate in a NAD-dependent manner. Rate-limiting enzyme in the synthesis of all inositol-containing compounds. This is Inositol-3-phosphate synthase (INO1) from Saccharomyces cerevisiae (strain ATCC 204508 / S288c) (Baker's yeast).